Consider the following 1006-residue polypeptide: 5'-3' exoribonuclease 2 (1006 aa).

Coiled-coil stretches lie at residues 256 to 287 (FAQD…NSEQ) and 453 to 544 (RLKK…AESE). The segment at 492–529 (DDAVSKANKTNFNLAEVMKQKIINKKHRLEKDNEEEEI) is required for retention in the nucleus. Over residues 561–575 (DRENSETTEVSRDSP) the composition is skewed to basic and acidic residues. Disordered regions lie at residues 561 to 584 (DREN…NVSE) and 939 to 1006 (HNYG…ANRR). Ser-574 is modified (phosphoserine). The span at 939–956 (HNYGRNSYNSQPGFNNSR) shows a compositional bias: polar residues. 6 consecutive repeat copies span residues 955–958 (SRYD), 961–964 (NNNY), 972–974 (NNN), 975–978 (YSGN), 984–986 (YSG), and 996–999 (SRYD). A 2 X 4 AA repeats of S-R-Y-D, N-N-N-Y, Y-S-G-N region spans residues 955–999 (SRYDGGNNNYRQNSNYRNNNYSGNRNSGQYSGNSYSRNNKQSRYD). A compositionally biased stretch (low complexity) spans 959 to 993 (GGNNNYRQNSNYRNNNYSGNRNSGQYSGNSYSRNN). Residues 996 to 1006 (SRYDNSRANRR) show a composition bias toward basic and acidic residues.

It belongs to the 5'-3' exonuclease family. XRN2/RAT1 subfamily. Interacts with RAI1 and RTT103. The cofactor is Mg(2+). Mn(2+) serves as cofactor.

The protein resides in the nucleus. With respect to regulation, inhibited by nucleoside 3', 5'-bisphosphates. Its function is as follows. Possesses 5'-&gt;3' exoribonuclease activity. Required for the processing of nuclear mRNA, rRNA and small nucleolar RNA (snoRNA) precursors. May promote termination of transcription by RNA polymerase II via the recruitment of 3'-end processing factors to the poly(A) site and by the degradation of nascent RNA downstream of the poly(A) site. This chain is 5'-3' exoribonuclease 2 (RAT1), found in Saccharomyces cerevisiae (strain ATCC 204508 / S288c) (Baker's yeast).